A 701-amino-acid polypeptide reads, in one-letter code: Peptide transporter CstA (701 aa).

Over Met1–Lys6 the chain is Cytoplasmic. A helical membrane pass occupies residues Tyr7 to Asn27. At Arg28–Asn33 the chain is on the periplasmic side. A helical transmembrane segment spans residues Ala34 to Leu54. Topologically, residues Tyr55 to Lys86 are cytoplasmic. Residues Val87 to Leu107 traverse the membrane as a helical segment. Over Ala108 to Met117 the chain is Periplasmic. The chain crosses the membrane as a helical span at residues Ile118 to Val138. The Cytoplasmic portion of the chain corresponds to Ser139–Gly160. A helical membrane pass occupies residues Val161 to Ile181. Over Val182–Ser189 the chain is Periplasmic. The helical transmembrane segment at Pro190–Leu210 threads the bilayer. The Cytoplasmic segment spans residues Arg211 to Arg217. The helical transmembrane segment at Ile218–Trp238 threads the bilayer. Topologically, residues Val239–Gln255 are periplasmic. Residues Leu256 to Leu276 traverse the membrane as a helical segment. Residues Ala277 to Asp280 lie on the Cytoplasmic side of the membrane. Residues Tyr281–Met301 form a helical membrane-spanning segment. Residues Arg302–Asn324 lie on the Periplasmic side of the membrane. A helical transmembrane segment spans residues Leu325 to Ile345. The Cytoplasmic segment spans residues Ser346–Ser372. The chain crosses the membrane as a helical span at residues Phe373–Met393. The Periplasmic portion of the chain corresponds to Asn394 to Ser395. Residues Pro396–Val416 form a helical membrane-spanning segment. Topologically, residues Ser417 to Ser439 are cytoplasmic. The helical transmembrane segment at Ile440–Gly460 threads the bilayer. The Periplasmic segment spans residues Ala461 to Gly463. The helical transmembrane segment at Gly464–Leu484 threads the bilayer. The Cytoplasmic portion of the chain corresponds to Thr485–Ala523. The helical transmembrane segment at Leu524–Ile544 threads the bilayer. Residues Asn545–Leu550 lie on the Periplasmic side of the membrane. Residues Phe551–Phe571 traverse the membrane as a helical segment. Topologically, residues Lys572–Arg577 are cytoplasmic. Residues Tyr578 to Trp598 traverse the membrane as a helical segment. Topologically, residues Gln599 to Arg643 are periplasmic. Residues Leu644 to Ile664 form a helical membrane-spanning segment. The Cytoplasmic portion of the chain corresponds to Lys665–His701.

Belongs to the peptide transporter carbon starvation (CstA) (TC 2.A.114) family.

It is found in the cell inner membrane. In terms of biological role, involved in peptide utilization during carbon starvation. This Escherichia coli (strain K12) protein is Peptide transporter CstA.